We begin with the raw amino-acid sequence, 30 residues long: Poly-His-poly-Gly peptide 2 (30 aa).

The span at 1–18 (EDDHDHHHHHHHHHHHHG) shows a compositional bias: basic residues. The tract at residues 1–30 (EDDHDHHHHHHHHHHHHGVGGGGGGGGGGA) is disordered. A compositionally biased stretch (gly residues) spans 19 to 30 (VGGGGGGGGGGA).

Expressed by the venom gland.

The protein resides in the secreted. Functionally, may serve as a metalloproteinase inhibitor during glandular storage. Their inhibition may be instantly disengaged, by dilution or physiochemical change, when venom is injected into tissue of the victim. This chain is Poly-His-poly-Gly peptide 2, found in Atheris nitschei (Great lakes bush viper).